Reading from the N-terminus, the 362-residue chain is DLA class I histocompatibility antigen, A9/A9 alpha chain (362 aa).

The first 24 residues, 1 to 24 (MEVVMPRALLVLLSAALALTPTRA), serve as a signal peptide directing secretion. The interval 25–114 (GSHSLRYFYT…LRGYYNQSEA (90 aa)) is alpha-1. Residues 25–306 (GSHSLRYFYT…RRWEPSPLST (282 aa)) lie on the Extracellular side of the membrane. A glycan (N-linked (GlcNAc...) asparagine) is linked at asparagine 110. Residues 115-207 (GSHTRQTMYG…EMGKETLLRA (93 aa)) are alpha-2. 2 disulfide bridges follow: cysteine 125–cysteine 189 and cysteine 228–cysteine 284. Positions 208-299 (DPPSTRVTHH…GLPEPITRRW (92 aa)) are alpha-3. The Ig-like C1-type domain maps to 210–296 (PSTRVTHHPV…QHEGLPEPIT (87 aa)). Residues 300-306 (EPSPLST) form a connecting peptide region. The chain crosses the membrane as a helical span at residues 307-329 (IVIVSIAALVLLVVAGVIGAVIW). Over 330-362 (RKQRSGGKGPGYSHAARDDSAQGSDVSLTAPRV) the chain is Cytoplasmic. Positions 333-362 (RSGGKGPGYSHAARDDSAQGSDVSLTAPRV) are disordered.

This sequence belongs to the MHC class I family. In terms of assembly, heterodimer of an alpha chain and a beta chain (beta-2-microglobulin).

The protein localises to the membrane. Functionally, involved in the presentation of foreign antigens to the immune system. This is DLA class I histocompatibility antigen, A9/A9 alpha chain from Canis lupus familiaris (Dog).